Here is a 514-residue protein sequence, read N- to C-terminus: 1,25-dihydroxyvitamin D(3) 24-hydroxylase, mitochondrial (514 aa).

Residues 1–35 (MSCPIDKRRTLIAFLRRLRDLGQPPRSVTSKASAS) constitute a mitochondrion transit peptide. Heme is bound at residue Cys-462.

It belongs to the cytochrome P450 family. The cofactor is heme.

The protein localises to the mitochondrion. The catalysed reaction is calcitriol + 2 reduced [adrenodoxin] + O2 + 2 H(+) = calcitetrol + 2 oxidized [adrenodoxin] + H2O. The enzyme catalyses calcitetrol + 2 reduced [adrenodoxin] + O2 + 2 H(+) = (1S)-1,25-dihydroxy-24-oxocalciol + 2 oxidized [adrenodoxin] + 2 H2O. It carries out the reaction (1S)-1,25-dihydroxy-24-oxocalciol + 2 reduced [adrenodoxin] + O2 + 2 H(+) = (1S)-1,23,25-trihydroxy-24-oxocalciol + 2 oxidized [adrenodoxin] + H2O. It catalyses the reaction (1S)-1,23-dihydroxy-24,25,26,27-tetranorcalciol + 2 reduced [adrenodoxin] + O2 + 2 H(+) = (1S)-1-hydroxy-23-oxo-24,25,26,27-tetranorcalciol + 2 oxidized [adrenodoxin] + 2 H2O. The catalysed reaction is (1S)-1-hydroxy-23-oxo-24,25,26,27-tetranorcalciol + 2 reduced [adrenodoxin] + O2 + H(+) = calcitroate + 2 oxidized [adrenodoxin] + H2O. The enzyme catalyses calcidiol + 2 reduced [adrenodoxin] + O2 + 2 H(+) = secalciferol + 2 oxidized [adrenodoxin] + H2O. It carries out the reaction secalciferol + 2 reduced [adrenodoxin] + O2 + 2 H(+) = 25-hydroxy-24-oxocalciol + 2 oxidized [adrenodoxin] + 2 H2O. It catalyses the reaction 25-hydroxy-24-oxocalciol + 2 reduced [adrenodoxin] + O2 + 2 H(+) = 23S,25-dihydroxy-24-oxocholecalciferol + 2 oxidized [adrenodoxin] + H2O. The catalysed reaction is 20S,23-dihydroxycholecalciferol + 2 reduced [adrenodoxin] + O2 + 2 H(+) = 20S,23,25-trihydroxycholecalciferol + 2 oxidized [adrenodoxin] + H2O. The enzyme catalyses 20S,23-dihydroxycholecalciferol + 2 reduced [adrenodoxin] + O2 + 2 H(+) = 20S,23,24-trihydroxycholecalciferol + 2 oxidized [adrenodoxin] + H2O. It carries out the reaction 20S-hydroxycholecalciferol + 2 reduced [adrenodoxin] + O2 + 2 H(+) = 20S,25-dihydroxycholecalciferol + 2 oxidized [adrenodoxin] + H2O. It catalyses the reaction 20S-hydroxycholecalciferol + 2 reduced [adrenodoxin] + O2 + 2 H(+) = 20S,24S-dihydroxycholecalciferol + 2 oxidized [adrenodoxin] + H2O. The catalysed reaction is 20S-hydroxycholecalciferol + 2 reduced [adrenodoxin] + O2 + 2 H(+) = 20S,24R-dihydroxycholecalciferol + 2 oxidized [adrenodoxin] + H2O. Functionally, a cytochrome P450 monooxygenase with a key role in vitamin D catabolism and calcium homeostasis. Via C24-oxidation pathway, catalyzes the inactivation of both the vitamin D precursor calcidiol (25-hydroxyvitamin D(3)) and the active hormone calcitriol (1-alpha,25-dihydroxyvitamin D(3)). With initial hydroxylation at C-24 (via C24-oxidation pathway), performs a sequential 6-step oxidation of calcitriol leading to the formation of the biliary metabolite calcitroic acid. Hydroxylates at C-24 or C-25 other vitamin D active metabolites, such as CYP11A1-derived secosteroids 20S-hydroxycholecalciferol and 20S,23-dihydroxycholecalciferol. Mechanistically, uses molecular oxygen inserting one oxygen atom into a substrate, and reducing the second into a water molecule, with two electrons provided by NADPH via FDXR/adrenodoxin reductase and FDX1/adrenodoxin. This Rattus norvegicus (Rat) protein is 1,25-dihydroxyvitamin D(3) 24-hydroxylase, mitochondrial (Cyp24a1).